The chain runs to 244 residues: 1-(5-phosphoribosyl)-5-[(5-phosphoribosylamino)methylideneamino] imidazole-4-carboxamide isomerase (244 aa).

The active-site Proton acceptor is Asp-11. The active-site Proton donor is the Asp-132.

The protein belongs to the HisA/HisF family.

Its subcellular location is the cytoplasm. The catalysed reaction is 1-(5-phospho-beta-D-ribosyl)-5-[(5-phospho-beta-D-ribosylamino)methylideneamino]imidazole-4-carboxamide = 5-[(5-phospho-1-deoxy-D-ribulos-1-ylimino)methylamino]-1-(5-phospho-beta-D-ribosyl)imidazole-4-carboxamide. It functions in the pathway amino-acid biosynthesis; L-histidine biosynthesis; L-histidine from 5-phospho-alpha-D-ribose 1-diphosphate: step 4/9. The chain is 1-(5-phosphoribosyl)-5-[(5-phosphoribosylamino)methylideneamino] imidazole-4-carboxamide isomerase from Sphingopyxis alaskensis (strain DSM 13593 / LMG 18877 / RB2256) (Sphingomonas alaskensis).